A 327-amino-acid polypeptide reads, in one-letter code: MLIALIAGIVTFILTIIGIPAFIRFYHKARITGQQMHEDVKQHQAKAGTPTMGGTVFLLTSVLASFVIGLFSHQLSNGLIMILFILVLYGVVGFLDDFLKVFRKINEGLNPKQKLFLQLVGGVVFYFFYNQHGAGDQLNIFTVPVQLGFLYVFFVLFWLIGFSNAVNLTDGIDGLASISVVISLVAYAVIAVEQKRFDILIVIISMIGGLLGFFVFNHKPAKIFMGDVGSLALGGMLAAISISLHQEWTLLLIGIVYVFETTSVMMQVTYFKLTGGKRIFRMTPVHHHFELGGLTGHGKEWSEWKVDFFFWGIGIVGSLLTLAILYL.

Helical transmembrane passes span 3 to 23, 51 to 71, 75 to 95, 115 to 135, 140 to 160, 172 to 192, 197 to 217, 223 to 243, 248 to 268, and 306 to 326; these read IALI…PAFI, TMGG…IGLF, LSNG…VGFL, LFLQ…HGAG, IFTV…FWLI, IDGL…VIAV, FDIL…FVFN, IFMG…ISIS, WTLL…MMQV, and VDFF…AILY.

Belongs to the glycosyltransferase 4 family. MraY subfamily. Requires Mg(2+) as cofactor.

The protein localises to the cell membrane. The catalysed reaction is UDP-N-acetyl-alpha-D-muramoyl-L-alanyl-gamma-D-glutamyl-L-lysyl-D-alanyl-D-alanine + di-trans,octa-cis-undecaprenyl phosphate = Mur2Ac(oyl-L-Ala-gamma-D-Glu-L-Lys-D-Ala-D-Ala)-di-trans,octa-cis-undecaprenyl diphosphate + UMP. It functions in the pathway cell wall biogenesis; peptidoglycan biosynthesis. In terms of biological role, catalyzes the initial step of the lipid cycle reactions in the biosynthesis of the cell wall peptidoglycan: transfers peptidoglycan precursor phospho-MurNAc-pentapeptide from UDP-MurNAc-pentapeptide onto the lipid carrier undecaprenyl phosphate, yielding undecaprenyl-pyrophosphoryl-MurNAc-pentapeptide, known as lipid I. The polypeptide is Phospho-N-acetylmuramoyl-pentapeptide-transferase (Streptococcus sanguinis (strain SK36)).